Here is a 391-residue protein sequence, read N- to C-terminus: Succinyl-diaminopimelate desuccinylase (391 aa).

H74 contacts Zn(2+). Residue D76 is part of the active site. Residue D107 coordinates Zn(2+). E141 acts as the Proton acceptor in catalysis. E142, E170, and H360 together coordinate Zn(2+).

Belongs to the peptidase M20A family. DapE subfamily. As to quaternary structure, homodimer. It depends on Zn(2+) as a cofactor. Co(2+) serves as cofactor.

The enzyme catalyses N-succinyl-(2S,6S)-2,6-diaminopimelate + H2O = (2S,6S)-2,6-diaminopimelate + succinate. The protein operates within amino-acid biosynthesis; L-lysine biosynthesis via DAP pathway; LL-2,6-diaminopimelate from (S)-tetrahydrodipicolinate (succinylase route): step 3/3. Functionally, catalyzes the hydrolysis of N-succinyl-L,L-diaminopimelic acid (SDAP), forming succinate and LL-2,6-diaminopimelate (DAP), an intermediate involved in the bacterial biosynthesis of lysine and meso-diaminopimelic acid, an essential component of bacterial cell walls. The chain is Succinyl-diaminopimelate desuccinylase from Variovorax paradoxus (strain S110).